The following is a 311-amino-acid chain: tRNA dimethylallyltransferase (311 aa).

10-17 (GPTASGKT) lines the ATP pocket. 12-17 (TASGKT) contacts substrate. 3 interaction with substrate tRNA regions span residues 35–38 (DSAL), 159–163 (QRINR), and 240–245 (RCVGYR).

The protein belongs to the IPP transferase family. As to quaternary structure, monomer. It depends on Mg(2+) as a cofactor.

It carries out the reaction adenosine(37) in tRNA + dimethylallyl diphosphate = N(6)-dimethylallyladenosine(37) in tRNA + diphosphate. In terms of biological role, catalyzes the transfer of a dimethylallyl group onto the adenine at position 37 in tRNAs that read codons beginning with uridine, leading to the formation of N6-(dimethylallyl)adenosine (i(6)A). The protein is tRNA dimethylallyltransferase of Haemophilus influenzae (strain PittEE).